A 90-amino-acid polypeptide reads, in one-letter code: Small ribosomal subunit protein uS15c (90 aa).

This sequence belongs to the universal ribosomal protein uS15 family. Part of the 30S ribosomal subunit.

The protein localises to the plastid. This chain is Small ribosomal subunit protein uS15c (rps15), found in Cuscuta reflexa (Southern Asian dodder).